We begin with the raw amino-acid sequence, 616 residues long: Dihydroxy-acid dehydratase (616 aa).

A Mg(2+)-binding site is contributed by D81. A [2Fe-2S] cluster-binding site is contributed by C122. Positions 123 and 124 each coordinate Mg(2+). N6-carboxylysine is present on K124. C195 is a [2Fe-2S] cluster binding site. A Mg(2+)-binding site is contributed by E491. The active-site Proton acceptor is the S517.

It belongs to the IlvD/Edd family. Homodimer. [2Fe-2S] cluster is required as a cofactor. It depends on Mg(2+) as a cofactor.

The enzyme catalyses (2R)-2,3-dihydroxy-3-methylbutanoate = 3-methyl-2-oxobutanoate + H2O. It catalyses the reaction (2R,3R)-2,3-dihydroxy-3-methylpentanoate = (S)-3-methyl-2-oxopentanoate + H2O. Its pathway is amino-acid biosynthesis; L-isoleucine biosynthesis; L-isoleucine from 2-oxobutanoate: step 3/4. It functions in the pathway amino-acid biosynthesis; L-valine biosynthesis; L-valine from pyruvate: step 3/4. Functionally, functions in the biosynthesis of branched-chain amino acids. Catalyzes the dehydration of (2R,3R)-2,3-dihydroxy-3-methylpentanoate (2,3-dihydroxy-3-methylvalerate) into 2-oxo-3-methylpentanoate (2-oxo-3-methylvalerate) and of (2R)-2,3-dihydroxy-3-methylbutanoate (2,3-dihydroxyisovalerate) into 2-oxo-3-methylbutanoate (2-oxoisovalerate), the penultimate precursor to L-isoleucine and L-valine, respectively. This Escherichia coli O127:H6 (strain E2348/69 / EPEC) protein is Dihydroxy-acid dehydratase.